The chain runs to 171 residues: Shikimate kinase (171 aa).

ATP is bound at residue 11 to 16 (GTGKTT). Residue Thr15 participates in Mg(2+) binding. Residues Asp33, Arg57, and Gly79 each contribute to the substrate site. Residue Arg117 coordinates ATP. Arg136 contacts substrate.

It belongs to the shikimate kinase family. In terms of assembly, monomer. Requires Mg(2+) as cofactor.

It localises to the cytoplasm. It carries out the reaction shikimate + ATP = 3-phosphoshikimate + ADP + H(+). Its pathway is metabolic intermediate biosynthesis; chorismate biosynthesis; chorismate from D-erythrose 4-phosphate and phosphoenolpyruvate: step 5/7. Catalyzes the specific phosphorylation of the 3-hydroxyl group of shikimic acid using ATP as a cosubstrate. This is Shikimate kinase from Caldanaerobacter subterraneus subsp. tengcongensis (strain DSM 15242 / JCM 11007 / NBRC 100824 / MB4) (Thermoanaerobacter tengcongensis).